The following is a 289-amino-acid chain: UPF0761 membrane protein ESA_04062 (289 aa).

6 helical membrane passes run 44–64 (LLSLVPFVAVIFALFAAFPMF), 104–124 (VGALGLIVTSLLLMYAIDSAL), 140–160 (FAVYWMILTLGPLLAGASLVI), 183–203 (IFPLLLSWLSFWLLYSVVPTT), 215–235 (LVAALLFELGKKGFALYITMF), and 244–264 (VLAVIPILFLWVYWTWCIVLL).

It belongs to the UPF0761 family.

The protein localises to the cell inner membrane. In Cronobacter sakazakii (strain ATCC BAA-894) (Enterobacter sakazakii), this protein is UPF0761 membrane protein ESA_04062.